A 374-amino-acid chain; its full sequence is 12-oxophytodienoate reductase 2 (374 aa).

Met1 bears the N-acetylmethionine mark. FMN is bound by residues 33–35 (PLT), Ala66, and Gln108. His185 contributes to the substrate binding site. Tyr190 (proton donor) is an active-site residue. Residue Arg237 coordinates FMN. Arg277 contributes to the substrate binding site. FMN-binding positions include 305-307 (AGG) and 328-329 (GR).

This sequence belongs to the NADH:flavin oxidoreductase/NADH oxidase family. Requires FMN as cofactor. As to expression, expressed at highest levels in roots and cotyledons, and at lower levels in leaves, shoots and flowers (sepals, petals, maturing siliques and developing pollen).

The protein resides in the cytoplasm. It catalyses the reaction (1S,2S)-OPC-8 + NADP(+) = (9S,13S,15Z)-12-oxophyto-10,15-dienoate + NADPH + H(+). The catalysed reaction is a 4,5-didehydrojasmonate + NADPH + H(+) = a jasmonate + NADP(+). It participates in lipid metabolism; oxylipin biosynthesis. Functionally, specifically cleaves olefinic bonds in alpha,beta-unsaturated carbonyls and may be involved in detoxification or modification of these reactive compounds. May be involved in the biosynthesis or metabolism of oxylipin signaling molecules. In vitro, reduces 9R,13R-12-oxophytodienoic acid (9R,13R-OPDA) to 9R,13R-OPC-8:0, but only poorly 9S,13S-OPDA, the natural precursor of jasmonic acid (JA). Can detoxify the explosive 2,4,6-trinitrotoluene (TNT) in vitro and in vivo by catalyzing its nitroreduction to form hydroxylamino-dinitrotoluene (HADNT). Functions in an alternative and OPR3-independent pathway for JA biosynthesis. Catalyzes the NADPH-dependent reduction of 4,5-didehydrojasmonates to jasmonates. In Arabidopsis thaliana (Mouse-ear cress), this protein is 12-oxophytodienoate reductase 2.